Reading from the N-terminus, the 605-residue chain is Replication protein E1 (605 aa).

The Nuclear localization signal motif lies at 77–79; the sequence is KRK. Phosphoserine; by host occurs at positions 82 and 90. The short motif at 89–98 is the Nuclear export signal element; that stretch reads LSPRLESITL. Positions 145-308 are DNA-binding region; that stretch reads QIGTVDIHYT…TIVGHQSTEA (164 aa). Positions 407–557 constitute an SF3 helicase domain; it reads VNFIMFLAAL…FPMKADNTPE (151 aa). 433 to 440 lines the ATP pocket; that stretch reads GPPNTGKS. K514 is covalently cross-linked (Glycyl lysine isopeptide (Lys-Gly) (interchain with G-Cter in SUMO)). The tract at residues 580-605 is disordered; that stretch reads DQEDEGDNGESQRPFQCSARSANEHL. The segment covering 588–605 has biased composition (polar residues); that stretch reads GESQRPFQCSARSANEHL.

Belongs to the papillomaviridae E1 protein family. Can form hexamers. Interacts with E2 protein; this interaction increases E1 DNA binding specificity. Interacts with host DNA polymerase subunit POLA2. Interacts with host single stranded DNA-binding protein RPA1. Interacts with host TOP1; this interaction stimulates the enzymatic activity of TOP1. Post-translationally, phosphorylated. Sumoylated.

The protein resides in the host nucleus. It catalyses the reaction Couples ATP hydrolysis with the unwinding of duplex DNA by translocating in the 3'-5' direction.. It carries out the reaction ATP + H2O = ADP + phosphate + H(+). Functionally, ATP-dependent DNA 3'-5' helicase required for initiation of viral DNA replication. It forms a complex with the viral E2 protein. The E1-E2 complex binds to the replication origin which contains binding sites for both proteins. During the initial step, a dimer of E1 interacts with a dimer of protein E2 leading to a complex that binds the viral origin of replication with high specificity. Then, a second dimer of E1 displaces the E2 dimer in an ATP-dependent manner to form the E1 tetramer. Following this, two E1 monomers are added to each half of the site, which results in the formation of two E1 trimers on the viral ori. Subsequently, two hexamers will be created. The double hexamer acts as a bi-directional helicase machinery and unwinds the viral DNA and then recruits the host DNA polymerase to start replication. The polypeptide is Replication protein E1 (Homo sapiens (Human)).